Reading from the N-terminus, the 222-residue chain is Leucyl/phenylalanyl-tRNA--protein transferase (222 aa).

The protein belongs to the L/F-transferase family.

The protein localises to the cytoplasm. The enzyme catalyses N-terminal L-lysyl-[protein] + L-leucyl-tRNA(Leu) = N-terminal L-leucyl-L-lysyl-[protein] + tRNA(Leu) + H(+). The catalysed reaction is N-terminal L-arginyl-[protein] + L-leucyl-tRNA(Leu) = N-terminal L-leucyl-L-arginyl-[protein] + tRNA(Leu) + H(+). It carries out the reaction L-phenylalanyl-tRNA(Phe) + an N-terminal L-alpha-aminoacyl-[protein] = an N-terminal L-phenylalanyl-L-alpha-aminoacyl-[protein] + tRNA(Phe). Its function is as follows. Functions in the N-end rule pathway of protein degradation where it conjugates Leu, Phe and, less efficiently, Met from aminoacyl-tRNAs to the N-termini of proteins containing an N-terminal arginine or lysine. This Legionella pneumophila (strain Paris) protein is Leucyl/phenylalanyl-tRNA--protein transferase.